We begin with the raw amino-acid sequence, 136 residues long: Large ribosomal subunit protein uL16c (136 aa).

It belongs to the universal ribosomal protein uL16 family. As to quaternary structure, part of the 50S ribosomal subunit.

Its subcellular location is the plastid. The protein localises to the chloroplast. The protein is Large ribosomal subunit protein uL16c of Chlamydomonas reinhardtii (Chlamydomonas smithii).